Here is a 229-residue protein sequence, read N- to C-terminus: Mannose-specific lectin TAR1 (229 aa).

An N-terminal signal peptide occupies residues methionine 1 to alanine 23. Bulb-type lectin domains follow at residues threonine 26 to proline 131 and aspartate 145 to leucine 229. Beta-D-mannose is bound by residues glutamine 51–asparagine 55, tyrosine 59, tryptophan 63, glutamine 64, glutamine 170–asparagine 174, tyrosine 178, and tyrosine 182–glutamine 185. The Carbohydrate-binding motif 1 motif lies at glutamine 51 to tyrosine 59. 2 cysteine pairs are disulfide-bonded: cysteine 54–cysteine 74 and cysteine 173–cysteine 195. The Carbohydrate-binding motif 2 motif lies at glutamine 170 to tyrosine 178.

In terms of assembly, forms heterotetramer of 2 chains 1 and 2 chains 2 arranged as a dimer of chain 1 and chain 2 heterodimers.

It is found in the secreted. Its function is as follows. Mannose-specific lectin. Shows agglutinating activity towards erythrocytes from rabbit. The polypeptide is Mannose-specific lectin TAR1 (Colocasia esculenta (Wild taro)).